Here is a 685-residue protein sequence, read N- to C-terminus: Twinkle mtDNA helicase (685 aa).

The N-terminal 31 residues, 1–31 (MWLLLRRAYPLRILLPLRGEWVGRRGLPRSL), are a transit peptide targeting the mitochondrion. Residues 1–122 (MWLLLRRAYP…LCMTSLAEGS (122 aa)) form a contributes to single strand DNA binding activity region. The interval 54-214 (PVTTTEIRQY…LVFPWFTPGS (161 aa)) is N-terminal region (NTR). Positions 122–373 (SWEDLQASVE…WHKSIVSFRQ (252 aa)) are required for hexamers formation and DNA helicase activity. The segment at 215–335 (SGLRGLKLLG…LNPKRCSLVR (121 aa)) is primase-like domain. Residues 385–636 (VEQAAGVRWS…LTFSIPPKSK (252 aa)) enclose the SF4 helicase domain. A maybe required for stable oligomeric structure region spans residues 406–591 (HRKGELTVFT…QEADNVLILQ (186 aa)). 416-423 (GPTGSGKT) lines the ATP pocket. The stretch at 454-482 (RVMLTQFAVTRLEEQLDKYEEWADRFEDL) forms a coiled coil. The segment at 641-685 (KIKDDNGLVAKKSSSGKKGAAHQNPEICLGQDPSPAQPDTSKSSG) is might negatively regulate ATPase activity. Residues 642 to 685 (IKDDNGLVAKKSSSGKKGAAHQNPEICLGQDPSPAQPDTSKSSG) form a disordered region.

Homohexamer (via C-terminus), which assembles in a ring-like structure. Homoheptamer, which assembles in a ring-like structure. Homooctamer, which assembles in a ring-like structure. Oligomers may sequentially eject two monomers (octamer&gt;heptamer&gt;hexamer) upon DNA binding. Oligomerization is Mg(2+), nucleotide and DNA-independent, however, Mg(2+) and nucleotide stabilize the homohexameric form. Interacts with POLG in vitro. Interacts with LONP1. In terms of tissue distribution, ubiquitous with the highest levels in the liver, heart and kidneys. The skeletal muscle, brain and testis showed lower but detectable expression. Expression is coregulated with MRPL43.

The protein resides in the mitochondrion matrix. Its subcellular location is the mitochondrion nucleoid. It localises to the mitochondrion inner membrane. It carries out the reaction ATP + H2O = ADP + phosphate + H(+). The catalysed reaction is Couples ATP hydrolysis with the unwinding of duplex DNA at the replication fork by translocating in the 5'-3' direction. This creates two antiparallel DNA single strands (ssDNA). The leading ssDNA polymer is the template for DNA polymerase III holoenzyme which synthesizes a continuous strand.. Its function is as follows. Mitochondrial helicase involved in mtDNA replication and repair. Might have a role in mtDNA repair. Has DNA strand separation activity needed to form a processive replication fork for leading strand synthesis which is catalyzed by the formation of a replisome complex with POLG and mtSDB. Preferentially unwinds DNA substrates with pre-existing 5'-and 3'- single-stranded tails but is also active on a 5'- flap substrate. Can dissociate the invading strand of immobile or mobile D-loop DNA structures irrespective of the single strand polarity of the third strand. In addition to its DNA strand separation activity, also has DNA strand annealing, DNA strand-exchange and DNA branch migration activities. The polypeptide is Twinkle mtDNA helicase (Mus musculus (Mouse)).